The primary structure comprises 212 residues: Stem bromelain (212 aa).

Intrachain disulfides connect Cys23–Cys63 and Cys57–Cys96. Residue Cys26 is part of the active site. Residue Asn117 is glycosylated (N-linked (GlcNAc...) asparagine). Residues Cys152 and Cys199 are joined by a disulfide bond. His158 is an active-site residue.

The protein belongs to the peptidase C1 family.

It carries out the reaction Broad specificity for cleavage of proteins, but strong preference for Z-Arg-Arg-|-NHMec among small molecule substrates.. In terms of biological role, cysteine proteinase with a high level of diversity in substrate specificity. The protein is Stem bromelain of Ananas comosus (Pineapple).